The chain runs to 275 residues: MTPSPVLNLLVSNDDGIFSQGVRTLANTLVAAGHEVTVVCPDRERSATGHGLTLHRPIRAGIVEDVFDPRIKAWSCSGTPADCVKFALHAVMPRYPDFVLSGVNHGANLGTDVLYSGTVSAAMEGLIEGIPSIALSLVSFTATDFQPAADFANCFVQHLWRSPLTEPTLFSINIPAVPAEQIAGVRLTRQGLQRYSETFEERYDPRGKRYYWLAGERVKEIPQPDYLRLNRRIPTDVQASQDNFITITPLQYNLTDINGVNIIEKTNWLDHLNFD.

Residues aspartate 14, aspartate 15, serine 46, and asparagine 104 each coordinate a divalent metal cation.

The protein belongs to the SurE nucleotidase family. The cofactor is a divalent metal cation.

It is found in the cytoplasm. The enzyme catalyses a ribonucleoside 5'-phosphate + H2O = a ribonucleoside + phosphate. Functionally, nucleotidase that shows phosphatase activity on nucleoside 5'-monophosphates. The sequence is that of 5'-nucleotidase SurE from Synechocystis sp. (strain ATCC 27184 / PCC 6803 / Kazusa).